Consider the following 766-residue polypeptide: LPS-assembly protein LptD (766 aa).

The first 18 residues, 1-18, serve as a signal peptide directing secretion; it reads MNIRYLLLLSLMPHLVWA.

The protein belongs to the LptD family. As to quaternary structure, component of the lipopolysaccharide transport and assembly complex. Interacts with LptE and LptA.

It is found in the cell outer membrane. In terms of biological role, together with LptE, is involved in the assembly of lipopolysaccharide (LPS) at the surface of the outer membrane. The sequence is that of LPS-assembly protein LptD from Shewanella denitrificans (strain OS217 / ATCC BAA-1090 / DSM 15013).